A 539-amino-acid chain; its full sequence is Chaperonin GroEL 1 (539 aa).

ATP contacts are provided by residues 30–33 (TLGP), Lys-51, 87–91 (DGTTT), Gly-415, 480–482 (NAA), and Asp-496.

Belongs to the chaperonin (HSP60) family. As to quaternary structure, forms a cylinder of 14 subunits composed of two heptameric rings stacked back-to-back. Interacts with the co-chaperonin GroES.

It localises to the cytoplasm. It catalyses the reaction ATP + H2O + a folded polypeptide = ADP + phosphate + an unfolded polypeptide.. Its function is as follows. Together with its co-chaperonin GroES, plays an essential role in assisting protein folding. The GroEL-GroES system forms a nano-cage that allows encapsulation of the non-native substrate proteins and provides a physical environment optimized to promote and accelerate protein folding. The sequence is that of Chaperonin GroEL 1 from Erythrobacter litoralis (strain HTCC2594).